A 314-amino-acid chain; its full sequence is MYDKQDKQAVAIIGSGNIGTDLMIKVLRDAKHLEMGAMVGIDPASDGLARAKRLGVATTAHGIEGLVTMPNFGAIRIAFDATSAGAHHRHAAVLREHGVTVIDLTPAAIGPFVVPVVNLFAHLDAPNLNMVTCGGQATIPIVHAVSRVAPVRYAEIVASIASRSAGPGTRANIDEFTETTSKAIETVGGAARGKAIIVLNPAEPPLMMRDTVYCLTEEEADTDEIESSIRAMVSAVASYVPGYRLKQAVQFDRYTAANPLALHANERRAGLKVSVFLEVEGAAHYLPSYAGNLDIMTSAALAAAEQIAASRVAA.

15-18 (SGNI) lines the NAD(+) pocket. Cys-133 (acyl-thioester intermediate) is an active-site residue. NAD(+) is bound by residues 164 to 172 (SAGPGTRAN) and Asn-292.

This sequence belongs to the acetaldehyde dehydrogenase family.

It carries out the reaction acetaldehyde + NAD(+) + CoA = acetyl-CoA + NADH + H(+). In Paraburkholderia phytofirmans (strain DSM 17436 / LMG 22146 / PsJN) (Burkholderia phytofirmans), this protein is Acetaldehyde dehydrogenase.